The primary structure comprises 670 residues: Probable potassium transport system protein Kup 1 (670 aa).

Transmembrane regions (helical) follow at residues 14 to 34, 58 to 78, 101 to 121, 147 to 167, 175 to 195, 196 to 216, 220 to 240, 252 to 272, 294 to 314, 345 to 365, 374 to 394, 403 to 423, and 427 to 447; these read GAGFIIAMGIVYGDIGTSPLY, LSLIIWTLTLITTVKYVWIAL, WLIIPAMIGGAALLSDGALTP, LPIVIITLAILAVLFLIQRFG, FGPVMFIWFSFLGITGLINLF, GDFSVLQAINPYWAIHLLLSP, AGIFVLGSVFLATTGAEALYS, VSWPFVKVCIILSYCGQGAWL, LIIFSVILATLAAIIASQALI, LYIPAVNLGLWLAASFIVVYF, AYGLAITVTMLMTTTLLTVYL, VLVGLFFTVFIFIEGLFFAAS, and FMHGGYVVVIIAAMILFVMAI.

Belongs to the HAK/KUP transporter (TC 2.A.72) family.

It is found in the cell membrane. It catalyses the reaction K(+)(in) + H(+)(in) = K(+)(out) + H(+)(out). Its function is as follows. Transport of potassium into the cell. Likely operates as a K(+):H(+) symporter. The sequence is that of Probable potassium transport system protein Kup 1 from Lactococcus lactis subsp. lactis (strain IL1403) (Streptococcus lactis).